The chain runs to 324 residues: Glyoxylate/hydroxypyruvate reductase B (324 aa).

Residues arginine 237 and glutamate 266 contribute to the active site. Histidine 285 acts as the Proton donor in catalysis.

It belongs to the D-isomer specific 2-hydroxyacid dehydrogenase family. GhrB subfamily. In terms of assembly, homodimer.

The protein resides in the cytoplasm. It carries out the reaction glycolate + NADP(+) = glyoxylate + NADPH + H(+). The enzyme catalyses (R)-glycerate + NAD(+) = 3-hydroxypyruvate + NADH + H(+). It catalyses the reaction (R)-glycerate + NADP(+) = 3-hydroxypyruvate + NADPH + H(+). In terms of biological role, catalyzes the NADPH-dependent reduction of glyoxylate and hydroxypyruvate into glycolate and glycerate, respectively. This chain is Glyoxylate/hydroxypyruvate reductase B, found in Salmonella heidelberg (strain SL476).